The sequence spans 501 residues: UDP-N-acetylmuramoyl-L-alanyl-D-glutamate--2,6-diaminopimelate ligase (501 aa).

Position 29 (S29) interacts with UDP-N-acetyl-alpha-D-muramoyl-L-alanyl-D-glutamate. 112 to 118 (GTNGKTS) serves as a coordination point for ATP. UDP-N-acetyl-alpha-D-muramoyl-L-alanyl-D-glutamate contacts are provided by residues 161-162 (TT), S188, and R196. K228 is modified (N6-carboxylysine). Meso-2,6-diaminopimelate is bound by residues R393, 417-420 (DNPR), G468, and E472. Residues 417 to 420 (DNPR) carry the Meso-diaminopimelate recognition motif motif.

This sequence belongs to the MurCDEF family. MurE subfamily. Mg(2+) is required as a cofactor. In terms of processing, carboxylation is probably crucial for Mg(2+) binding and, consequently, for the gamma-phosphate positioning of ATP.

The protein localises to the cytoplasm. The enzyme catalyses UDP-N-acetyl-alpha-D-muramoyl-L-alanyl-D-glutamate + meso-2,6-diaminopimelate + ATP = UDP-N-acetyl-alpha-D-muramoyl-L-alanyl-gamma-D-glutamyl-meso-2,6-diaminopimelate + ADP + phosphate + H(+). It participates in cell wall biogenesis; peptidoglycan biosynthesis. In terms of biological role, catalyzes the addition of meso-diaminopimelic acid to the nucleotide precursor UDP-N-acetylmuramoyl-L-alanyl-D-glutamate (UMAG) in the biosynthesis of bacterial cell-wall peptidoglycan. The polypeptide is UDP-N-acetylmuramoyl-L-alanyl-D-glutamate--2,6-diaminopimelate ligase (Acidovorax sp. (strain JS42)).